The following is a 786-amino-acid chain: Signal transducer and activator of transcription 5B (786 aa).

At Tyr-90 the chain carries Phosphotyrosine. The residue at position 128 (Ser-128) is a Phosphoserine. The SH2 domain occupies 589–686 (WNDGAILGFV…EVYSKYYTPV (98 aa)). Phosphotyrosine occurs at positions 682 and 699.

This sequence belongs to the transcription factor STAT family. Upon activation, forms a homodimer or a heterodimer with a related family member. Binds NR3C1. Interacts with NCOA1. Interacts with SOCS7. Interacts (via SH2 domain) with INSR. Interacts with CPEB3; this inhibits STAT5B-mediated transcriptional activation. Tyrosine phosphorylated in response to signaling via activated KIT, resulting in translocation to the nucleus. Tyrosine phosphorylated in response to signaling via activated FLT3; wild-type FLT3 results in much weaker phosphorylation than constitutively activated mutant FLT3. Alternatively, can be phosphorylated by JAK2. Phosphorylation at Tyr-699 by PTK6 or HCK leads to an increase of its transcriptional activity. In terms of tissue distribution, in the virgin, found in most tissues. Particularly abundant in muscle tissue of virgin and lactating females, and of males.

It is found in the cytoplasm. It localises to the nucleus. In terms of biological role, carries out a dual function: signal transduction and activation of transcription. Mediates cellular responses to the cytokine KITLG/SCF and other growth factors. Binds to the GAS element and activates PRL-induced transcription. Positively regulates hematopoietic/erythroid differentiation. In Mus musculus (Mouse), this protein is Signal transducer and activator of transcription 5B (Stat5b).